The sequence spans 315 residues: Eukaryotic translation initiation factor 2 subunit 1 (315 aa).

In terms of domain architecture, S1 motif spans Glu17–Arg88. Ser49 is subject to Phosphoserine; by HRI. Ser52 is modified (phosphoserine). Residue Lys141 is modified to N6-acetyllysine. Ser158 is subject to Phosphoserine. Thr279 and Thr281 each carry phosphothreonine. The tract at residues Arg292–Asp315 is disordered. Acidic residues predominate over residues Glu299–Glu308.

It belongs to the eIF-2-alpha family. As to quaternary structure, eukaryotic translation initiation factor 2 eIF2 is a heterotrimeric complex composed of an alpha (EIF2S1), a beta (EIF2S2) and a gamma (EIF2S3) chain. eIF2 is member of the 43S pre-initiation complex (43S PIC). eIF2 forms a complex with at least CELF1/CUGBP1, CALR, CALR3, EIF2S1, EIF2S2, HSP90B1 and HSPA5. Interaction with METAP2 protects EIF2S1 from inhibitory phosphorylation. Interacts with ABCF1. Associates with ribosomes. Interacts with DDX3X in an RNA-independent manner. Post-translationally, phosphorylation at Ser-49 and Ser-52 stabilizes the eIF-2/GDP/eIF2B complex and prevents GDP/GTP exchange reaction, thus impairing the recycling of eIF-2 between successive rounds of initiation and leading to global inhibition of translation, while concomitantly initiating the preferential translation of integrated stress response (ISR)-specific mRNAs. Substrate for at least 4 kinases: EIF2AK1/HRI, EIF2AK2/PKR, EIF2AK3/PERK and EIF2AK4/GCN2. Phosphorylation at Ser-52 by the EIF2AK3/PERK protein kinase occurs in response to the unfolded protein response. Phosphorylation on Ser-52 by the EIF2AK4/GCN2 protein kinase occurs in response to amino acid starvation and UV irradiation. Phosphorylation at Ser-52 by EIF2AK1/HRI in response to mitochondrial damage promotes relocalization to the mitochondrial surface.

Its subcellular location is the cytoplasm. The protein resides in the stress granule. It is found in the cytosol. It localises to the mitochondrion. Its activity is regulated as follows. Activity is regulated by phosphorylation at Ser-49 and Ser-52, which stabilizes the eIF2/GDP/eIF2B complex and prevents the eIF2B-mediated exchange of GDP for GTP, thereby preventing the formation of the 43S pre-initiation complex (43S PIC). This results in the global attenuation of 5' cap-dependent protein synthesis and concomitant translation of ISR-specific mRNAs that contain a short upstream open reading frame (uORF) in their 5' UTR, such as ATF4, ATF5, DDIT3/CHOP and PPP1R15A/GADD34. Its function is as follows. Member of the eIF2 complex that functions in the early steps of protein synthesis by forming a ternary complex with GTP and initiator tRNA. This complex binds to a 40S ribosomal subunit, followed by mRNA binding to form a 43S pre-initiation complex. Junction of the 60S ribosomal subunit to form the 80S initiation complex is preceded by hydrolysis of the GTP bound to eIF2 and release of an eIF2-GDP binary complex. In order for eIF2 to recycle and catalyze another round of initiation, the GDP bound to eIF2 must exchange with GTP by way of a reaction catalyzed by eIF2B. EIF2S1/eIF2-alpha is a key component of the integrated stress response (ISR), required for adaptation to various stress: phosphorylation by metabolic-stress sensing protein kinases (EIF2AK1/HRI, EIF2AK2/PKR, EIF2AK3/PERK and EIF2AK4/GCN2) in response to stress converts EIF2S1/eIF2-alpha in a global protein synthesis inhibitor, leading to a attenuation of cap-dependent translation, while concomitantly initiating the preferential translation of ISR-specific mRNAs, such as the transcriptional activators ATF4 and QRICH1, and hence allowing ATF4- and QRICH1-mediated reprogramming. EIF2S1/eIF2-alpha also acts as an activator of mitophagy in response to mitochondrial damage: phosphorylation by EIF2AK1/HRI promotes relocalization to the mitochondrial surface, thereby triggering PRKN-independent mitophagy. The polypeptide is Eukaryotic translation initiation factor 2 subunit 1 (EIF2S1) (Sus scrofa (Pig)).